The primary structure comprises 149 residues: Large ribosomal subunit protein bL20m (149 aa).

The N-terminal 9 residues, 1-9, are a transit peptide targeting the mitochondrion; that stretch reads MVFLSLSRW.

The protein belongs to the bacterial ribosomal protein bL20 family. As to quaternary structure, component of the mitochondrial ribosome large subunit (39S) which comprises a 16S rRNA and about 50 distinct proteins.

The protein resides in the mitochondrion. The chain is Large ribosomal subunit protein bL20m (mrpl20) from Xenopus laevis (African clawed frog).